A 54-amino-acid chain; its full sequence is Secreted virulence factor MC69 (54 aa).

A signal peptide spans 1–18 (MKFTLALLTTLCASLASA). Cysteine 38 and cysteine 48 are oxidised to a cystine.

This sequence belongs to the MC69 virulence factor family.

It is found in the secreted. Secreted protein required for appressorial penetration of intact host epidermal cells and for pathogenicity. The sequence is that of Secreted virulence factor MC69 from Colletotrichum orbiculare (strain 104-T / ATCC 96160 / CBS 514.97 / LARS 414 / MAFF 240422) (Cucumber anthracnose fungus).